Reading from the N-terminus, the 417-residue chain is UDP-N-acetylglucosamine 1-carboxyvinyltransferase (417 aa).

22 to 23 (KN) serves as a coordination point for phosphoenolpyruvate. Residue Arg93 participates in UDP-N-acetyl-alpha-D-glucosamine binding. Cys117 acts as the Proton donor in catalysis. Cys117 is modified (2-(S-cysteinyl)pyruvic acid O-phosphothioketal). Residues 122-126 (RPVDQ), Asp305, and Ile327 each bind UDP-N-acetyl-alpha-D-glucosamine.

This sequence belongs to the EPSP synthase family. MurA subfamily.

The protein resides in the cytoplasm. It catalyses the reaction phosphoenolpyruvate + UDP-N-acetyl-alpha-D-glucosamine = UDP-N-acetyl-3-O-(1-carboxyvinyl)-alpha-D-glucosamine + phosphate. It participates in cell wall biogenesis; peptidoglycan biosynthesis. Its function is as follows. Cell wall formation. Adds enolpyruvyl to UDP-N-acetylglucosamine. This is UDP-N-acetylglucosamine 1-carboxyvinyltransferase from Nitrosomonas eutropha (strain DSM 101675 / C91 / Nm57).